The sequence spans 481 residues: MKRGTLPKDVSGIKIHMIGIKGTGMSALAELLCARGARVSGSDVADVFYTDRILARLGVPVRTPFSCQNLADAPDVVIHSAAYVPEENDELAEAYRRGIPTLTYPEALGDISCARFSCGIAGVHGKTTTTAMIAQMVKELRLDASVLVGSAVSGNNDSCVVLNGDTFFIAETCEYRRHFLHFHPQKIVLTSVEHDHQDYYSSYEDILAAYFHYIDRLPQFGELFYCVDDQGVREVVQLAFFSRPDLVYVPYGERAWGDYGVSIHGVQDRKISFSLRGFAGEFYVALPGEHSVLNATGALALALSLVKKQYGEVTVEHLTALRKVLALFQGCRRRSEVLGEVRGILFMDDYGHHPTAIKKTLRGLKTFFPERRIVVDFMSHTYSRTAALLTEFAESFQDADVVILHEIYASAREVYQGEVNGEHLFELTKRKHRRVYYYEAVMQAVPFLQAELKEGDLFVTLGAGDNCKLGEVLFNYFKEEV.

Position 122–128 (G122–T128) interacts with ATP.

Belongs to the MurCDEF family.

The protein resides in the cytoplasm. It catalyses the reaction UDP-N-acetyl-alpha-D-muramate + L-alanine + ATP = UDP-N-acetyl-alpha-D-muramoyl-L-alanine + ADP + phosphate + H(+). It participates in cell wall biogenesis; peptidoglycan biosynthesis. Cell wall formation. The sequence is that of UDP-N-acetylmuramate--L-alanine ligase from Treponema pallidum (strain Nichols).